Reading from the N-terminus, the 76-residue chain is Exodeoxyribonuclease 7 small subunit (76 aa).

The protein belongs to the XseB family. Heterooligomer composed of large and small subunits.

It is found in the cytoplasm. It catalyses the reaction Exonucleolytic cleavage in either 5'- to 3'- or 3'- to 5'-direction to yield nucleoside 5'-phosphates.. Functionally, bidirectionally degrades single-stranded DNA into large acid-insoluble oligonucleotides, which are then degraded further into small acid-soluble oligonucleotides. The sequence is that of Exodeoxyribonuclease 7 small subunit from Bacillus cytotoxicus (strain DSM 22905 / CIP 110041 / 391-98 / NVH 391-98).